The sequence spans 860 residues: Leucine--tRNA ligase (860 aa).

The short motif at 73-83 (VLQPIGWDAFG) is the 'HIGH' region element. The short motif at 650–654 (SPADM) is the 'KMSKS' region element. Position 653 (Asp-653) interacts with ATP.

It belongs to the class-I aminoacyl-tRNA synthetase family.

The protein resides in the cytoplasm. The enzyme catalyses tRNA(Leu) + L-leucine + ATP = L-leucyl-tRNA(Leu) + AMP + diphosphate. The sequence is that of Leucine--tRNA ligase from Shigella flexneri.